The chain runs to 603 residues: Zinc finger protein 415 (603 aa).

Residues 264–286 (YRYIECDKALNHGSHMTVRQVSH) form a C2H2-type 1; degenerate zinc finger. C2H2-type zinc fingers lie at residues 292–314 (YKCD…WRVH), 320–342 (YKCN…RRVH), 348–370 (YKCY…QKTH), 376–398 (YTCK…QVIH), 404–426 (YKCN…QRIH), 432–454 (YKCN…WRIH), 460–482 (YKCN…RRVH), 488–510 (YKCN…QVIH), 516–538 (YKCN…QVIH), 544–566 (YKCN…QIIH), and 572–594 (YKCS…QIIH).

In terms of tissue distribution, expressed in all tissues examined. Isoforms are differentially expressed. Isoform 3 and isoform 5 were highly expressed, isoform 4 moderately expressed, isoform 2 lower expression, the lowest expression level was seem with isoform 1.

Its subcellular location is the nucleus. The protein resides in the cytoplasm. In terms of biological role, involved in transcriptional regulation. Transcriptional activity differed among the various isoforms. All isoforms except isoform 3 seem to suppresses the transcriptional activities of AP-1 and p53/TP53. The sequence is that of Zinc finger protein 415 (ZNF415) from Homo sapiens (Human).